The sequence spans 538 residues: Nicotinate phosphoribosyltransferase (538 aa).

Residues Tyr-21 and Thr-210 each coordinate nicotinate. His-213 is modified (phosphohistidine). Arg-318 contributes to the nicotinate binding site. Residue Thr-380 coordinates 5-phospho-alpha-D-ribose 1-diphosphate. Ser-537 carries the post-translational modification Phosphoserine.

Belongs to the NAPRTase family. Homodimer. Requires Mg(2+) as cofactor. Mn(2+) is required as a cofactor. Post-translationally, transiently phosphorylated on a His residue during the reaction cycle. Phosphorylation strongly increases the affinity for substrates and increases the rate of nicotinate D-ribonucleotide production. Dephosphorylation regenerates the low-affinity form of the enzyme, leading to product release.

It localises to the cytoplasm. Its subcellular location is the cytosol. The enzyme catalyses nicotinate + 5-phospho-alpha-D-ribose 1-diphosphate + ATP + H2O = nicotinate beta-D-ribonucleotide + ADP + phosphate + diphosphate. The protein operates within cofactor biosynthesis; NAD(+) biosynthesis; nicotinate D-ribonucleotide from nicotinate: step 1/1. Functionally, catalyzes the first step in the biosynthesis of NAD from nicotinic acid, the ATP-dependent synthesis of beta-nicotinate D-ribonucleotide from nicotinate and 5-phospho-D-ribose 1-phosphate. Helps prevent cellular oxidative stress via its role in NAD biosynthesis. The sequence is that of Nicotinate phosphoribosyltransferase (NAPRT) from Homo sapiens (Human).